The sequence spans 550 residues: Coiled-coil domain-containing protein 60 (550 aa).

The segment at 1-21 (MTKVPATKKLQSSPNSGAVRP) is disordered. Residues 71-98 (AILREETAKKKKQQQLQKLKEEERNKFQ) adopt a coiled-coil conformation. Disordered stretches follow at residues 219 to 293 (KFKI…EPLY) and 336 to 367 (AYKEMQTTLKSSERSSSTSAESHIQPVQKKSK). Residues 235-256 (RGSTLSLSRASGGSSPQSSMIS) show a composition bias toward low complexity. Positions 336-345 (AYKEMQTTLK) are enriched in polar residues.

The sequence is that of Coiled-coil domain-containing protein 60 (CCDC60) from Homo sapiens (Human).